Consider the following 327-residue polypeptide: Polyadenylate-binding protein-interacting protein 9 (327 aa).

The short motif at 59–69 (KLNPLAKEFFP) is the PAM2-like element. Basic and acidic residues predominate over residues 97–113 (KQSGEEFDLDAKKDDNT). Residues 97–132 (KQSGEEFDLDAKKDDNTRKRRNYSQGRRRLTGRISK) form a disordered region. Residues 114-125 (RKRRNYSQGRRR) carry the Bipartite nuclear localization signal motif. Positions 114–127 (RKRRNYSQGRRRLT) are enriched in basic residues. RRM domains follow at residues 141–216 (RTVY…PSKT) and 238–314 (RTIY…PSKT). The segment at 308 to 327 (RVSPSKTPVRPRITRPPSTN) is disordered.

The protein resides in the nucleus. In Arabidopsis thaliana (Mouse-ear cress), this protein is Polyadenylate-binding protein-interacting protein 9 (CID9).